The sequence spans 857 residues: Leucine--tRNA ligase (857 aa).

The 'HIGH' region motif lies at 42 to 52 (PYPSGNLHMGH). Residues 615–619 (KMSKS) carry the 'KMSKS' region motif. Residue Lys-618 coordinates ATP.

This sequence belongs to the class-I aminoacyl-tRNA synthetase family.

It is found in the cytoplasm. The enzyme catalyses tRNA(Leu) + L-leucine + ATP = L-leucyl-tRNA(Leu) + AMP + diphosphate. The protein is Leucine--tRNA ligase of Thermosynechococcus vestitus (strain NIES-2133 / IAM M-273 / BP-1).